We begin with the raw amino-acid sequence, 374 residues long: Eukaryotic translation initiation factor 3 subunit M (374 aa).

Serine 2 bears the N-acetylserine mark. 2 positions are modified to phosphoserine: serine 2 and serine 152. Residues 180 to 339 (AASKVMVELL…RKVVVSHSTH (160 aa)) form the PCI domain. The residue at position 254 (lysine 254) is an N6-acetyllysine. Serine 367 is subject to Phosphoserine.

It belongs to the eIF-3 subunit M family. In terms of assembly, component of the eukaryotic translation initiation factor 3 (eIF-3) complex, which is composed of 13 subunits: EIF3A, EIF3B, EIF3C, EIF3D, EIF3E, EIF3F, EIF3G, EIF3H, EIF3I, EIF3J, EIF3K, EIF3L and EIF3M. The eIF-3 complex appears to include 3 stable modules: module A is composed of EIF3A, EIF3B, EIF3G and EIF3I; module B is composed of EIF3F, EIF3H, and EIF3M; and module C is composed of EIF3C, EIF3D, EIF3E, EIF3K and EIF3L. EIF3C of module C binds EIF3B of module A and EIF3H of module B, thereby linking the three modules. EIF3J is a labile subunit that binds to the eIF-3 complex via EIF3B. The eIF-3 complex interacts with RPS6KB1 under conditions of nutrient depletion. Mitogenic stimulation leads to binding and activation of a complex composed of MTOR and RPTOR, leading to phosphorylation and release of RPS6KB1 and binding of EIF4B to eIF-3.

It is found in the cytoplasm. Its function is as follows. Component of the eukaryotic translation initiation factor 3 (eIF-3) complex, which is required for several steps in the initiation of protein synthesis. The eIF-3 complex associates with the 40S ribosome and facilitates the recruitment of eIF-1, eIF-1A, eIF-2:GTP:methionyl-tRNAi and eIF-5 to form the 43S pre-initiation complex (43S PIC). The eIF-3 complex stimulates mRNA recruitment to the 43S PIC and scanning of the mRNA for AUG recognition. The eIF-3 complex is also required for disassembly and recycling of post-termination ribosomal complexes and subsequently prevents premature joining of the 40S and 60S ribosomal subunits prior to initiation. The eIF-3 complex specifically targets and initiates translation of a subset of mRNAs involved in cell proliferation, including cell cycling, differentiation and apoptosis, and uses different modes of RNA stem-loop binding to exert either translational activation or repression. The sequence is that of Eukaryotic translation initiation factor 3 subunit M from Pongo abelii (Sumatran orangutan).